The sequence spans 263 residues: 4-hydroxy-tetrahydrodipicolinate reductase (263 aa).

Residues 7–12 (GFKGRM), 96–98 (GTT), and 122–125 (APNF) contribute to the NAD(+) site. The Proton donor/acceptor role is filled by H152. Residue H153 coordinates (S)-2,3,4,5-tetrahydrodipicolinate. K156 functions as the Proton donor in the catalytic mechanism. 162 to 163 (GT) is a (S)-2,3,4,5-tetrahydrodipicolinate binding site.

Belongs to the DapB family.

It is found in the cytoplasm. The enzyme catalyses (S)-2,3,4,5-tetrahydrodipicolinate + NAD(+) + H2O = (2S,4S)-4-hydroxy-2,3,4,5-tetrahydrodipicolinate + NADH + H(+). It carries out the reaction (S)-2,3,4,5-tetrahydrodipicolinate + NADP(+) + H2O = (2S,4S)-4-hydroxy-2,3,4,5-tetrahydrodipicolinate + NADPH + H(+). Its pathway is amino-acid biosynthesis; L-lysine biosynthesis via DAP pathway; (S)-tetrahydrodipicolinate from L-aspartate: step 4/4. Functionally, catalyzes the conversion of 4-hydroxy-tetrahydrodipicolinate (HTPA) to tetrahydrodipicolinate. In Listeria innocua serovar 6a (strain ATCC BAA-680 / CLIP 11262), this protein is 4-hydroxy-tetrahydrodipicolinate reductase.